Reading from the N-terminus, the 269-residue chain is Calretinin (269 aa).

EF-hand domains lie at 14–49 (LSASQFLDVWRHFDADGNGYIEGKELENFFQELESA), 61–96 (SLGDKMKEFMHKYDKNADGKIEMAELAQILPTEENF), 105–140 (GSSSEFMEAWRRYDTDRSGYIEANELKGFLSDLLKK), 149–184 (KLQEYTQTILRMFDMNGDGKLGLSEMSRLLPVQENF), 193–228 (LSSEEFNAIFAFYDKDGSGFIDEHELDALLKDLYEK), and 230–265 (KKEMSIQQLTNYRRSIMNLSDGGKLYRKELEVVLCS). Ca(2+) is bound by residues Asp27, Asp29, Asn31, Tyr33, Glu38, Asp74, Asn76, Asp78, Lys80, Glu85, Asp118, Asp120, Ser122, Tyr124, Glu129, Asp162, Asn164, Asp166, Lys168, Glu173, Asp206, Asp208, Ser210, and Glu217.

The protein belongs to the calbindin family.

The protein localises to the synapse. It localises to the cell projection. Its subcellular location is the dendrite. Functionally, calcium-binding protein involved in calcium homeostasis and signal transduction. It plays a critical role in buffering intracellular calcium levels and modulating calcium-dependent signaling pathways. Predominantly expressed in specific neuronal populations, influences synaptic plasticity and neuronal excitability, contributing to learning and memory. During embryonic development, it facilitates neuronal differentiation and maturation. The protein is Calretinin (CALB2) of Gallus gallus (Chicken).